The sequence spans 205 residues: Anaerobic dimethyl sulfoxide reductase chain B (205 aa).

4Fe-4S ferredoxin-type domains lie at 4–32 (YGFYFDSERCTGCKTCELACKDYKDLGTE), 57–89 (NIFAYYMSISCNHCADPACTKVCPTGAMHKNAD), and 90–119 (GFVIVNEEICIGCRYCHMACPYDAPQYDAQ). Residues Cys13, Cys16, Cys19, Cys23, Cys67, Cys70, Cys75, Cys79, Cys99, Cys102, Cys105, Cys109, Cys126, Cys129, Cys141, and Cys145 each contribute to the [4Fe-4S] cluster site.

As to quaternary structure, heterotrimeric enzyme composed of a catalytic heterodimer (DmsAB) and a membrane anchor protein (DmsC). It depends on [4Fe-4S] cluster as a cofactor.

In terms of biological role, electron transfer subunit of the terminal reductase during anaerobic growth on various sulfoxide and N-oxide compounds. The chain is Anaerobic dimethyl sulfoxide reductase chain B (dmsB) from Haemophilus influenzae (strain ATCC 51907 / DSM 11121 / KW20 / Rd).